The sequence spans 479 residues: MEGKVDVLLTWLKKSDKFYIAPNISICESPETGRGIVLSHGSIRKNDIIVSVPSSKQLNFHTILYHISKFNKELNIPGITIDRKPINYEDNIIEAENKAWADPRYGLYSELSKEFLLSLSSFQLVSFYILVENFLLPKWTHNEIYSDWKPFFDVWPSMEELRSIPAIWNCDPNSRYHSLIEYLPAASRKHMARISGLVREDWETISEVVLKWNEIYGSLSCTKNSDKFTSDELFSLFVHVYFIINSRCLYAKIPLKIEDSPSNFTLVPYVDFMNHICESDLHCYPQLSPQLRSEGENIIGIGQFTIRCGDHLYDNINEELFLNYGAHSNDFLLNEYGFVVDGNKWNYLDISDEIIELIDDDKKEVKTFLLEHDYWGDYTINETDISYRIFVALNYYVTRDERRVRKFIEGYISEDYFKPKISSVLKELLVSLTAKYTKTLSELTEKVSNLENNLCLQNLITIYKGYIKILTQHLQDLQS.

One can recognise an SET domain in the interval 22–325; the sequence is PNISICESPE…INEELFLNYG (304 aa). Tyrosine 324 is an S-adenosyl-L-methionine binding site.

Belongs to the class V-like SAM-binding methyltransferase superfamily. RKM2 family.

Functionally, S-adenosyl-L-methionine-dependent protein-lysine N-methyltransferase that trimethylates 60S ribosomal protein L12 (RPL12A and RPL12B) at 'Lys-4' and 'Lys-11'. The protein is Ribosomal lysine N-methyltransferase 2 of Saccharomyces cerevisiae (strain ATCC 204508 / S288c) (Baker's yeast).